We begin with the raw amino-acid sequence, 249 residues long: DNA polymerase sliding clamp (249 aa).

The protein belongs to the PCNA family. In terms of assembly, homotrimer. The subunits circularize to form a toroid; DNA passes through its center. Replication factor C (RFC) is required to load the toroid on the DNA.

Its function is as follows. Sliding clamp subunit that acts as a moving platform for DNA processing. Responsible for tethering the catalytic subunit of DNA polymerase and other proteins to DNA during high-speed replication. The polypeptide is DNA polymerase sliding clamp (Nanoarchaeum equitans (strain Kin4-M)).